Here is a 194-residue protein sequence, read N- to C-terminus: Phosphoheptose isomerase (194 aa).

An SIS domain is found at 37 to 194 (IAKSFKNKNK…IIEKEMKKIN (158 aa)). 52-54 (NGG) contacts substrate. The Zn(2+) site is built by His-61 and Glu-65. Residues Glu-65, 93-94 (ND), 119-121 (STS), Ser-124, and Gln-172 contribute to the substrate site. Residues Gln-172 and His-180 each contribute to the Zn(2+) site.

This sequence belongs to the SIS family. GmhA subfamily. In terms of assembly, homotetramer. It depends on Zn(2+) as a cofactor.

The protein localises to the cytoplasm. The enzyme catalyses 2 D-sedoheptulose 7-phosphate = D-glycero-alpha-D-manno-heptose 7-phosphate + D-glycero-beta-D-manno-heptose 7-phosphate. The protein operates within carbohydrate biosynthesis; D-glycero-D-manno-heptose 7-phosphate biosynthesis; D-glycero-alpha-D-manno-heptose 7-phosphate and D-glycero-beta-D-manno-heptose 7-phosphate from sedoheptulose 7-phosphate: step 1/1. In terms of biological role, catalyzes the isomerization of sedoheptulose 7-phosphate in D-glycero-D-manno-heptose 7-phosphate. The chain is Phosphoheptose isomerase from Buchnera aphidicola subsp. Schizaphis graminum (strain Sg).